We begin with the raw amino-acid sequence, 338 residues long: Glycerol-3-phosphate dehydrogenase [NAD(P)+] (338 aa).

4 residues coordinate NADPH: Ser-14, Tyr-15, His-35, and Lys-109. Lys-109, Gly-138, and Thr-140 together coordinate sn-glycerol 3-phosphate. Position 142 (Ala-142) interacts with NADPH. Sn-glycerol 3-phosphate-binding residues include Lys-194, Asp-247, Ser-257, Arg-258, and Asn-259. Lys-194 (proton acceptor) is an active-site residue. Position 258 (Arg-258) interacts with NADPH. 2 residues coordinate NADPH: Val-282 and Glu-284.

Belongs to the NAD-dependent glycerol-3-phosphate dehydrogenase family.

It localises to the cytoplasm. It catalyses the reaction sn-glycerol 3-phosphate + NAD(+) = dihydroxyacetone phosphate + NADH + H(+). It carries out the reaction sn-glycerol 3-phosphate + NADP(+) = dihydroxyacetone phosphate + NADPH + H(+). It functions in the pathway membrane lipid metabolism; glycerophospholipid metabolism. Functionally, catalyzes the reduction of the glycolytic intermediate dihydroxyacetone phosphate (DHAP) to sn-glycerol 3-phosphate (G3P), the key precursor for phospholipid synthesis. The chain is Glycerol-3-phosphate dehydrogenase [NAD(P)+] from Shewanella frigidimarina (strain NCIMB 400).